We begin with the raw amino-acid sequence, 97 residues long: Pyrin domain-containing protein 2 (97 aa).

In terms of domain architecture, Pyrin spans 1-94 (MASSAELDFN…SGRADEHCVM (94 aa)).

As to quaternary structure, interacts with PYCARD/ASC (via pyrin domain). Interacts with NLRP2 (via pyrin domain). In terms of tissue distribution, predominantly expressed in peripheral blood. Weakly expressed in testis.

The protein localises to the cytoplasm. The protein resides in the nucleus. Functionally, may play a role in innate immunity by disrupting the interaction between PYCARD and NLRP3, thereby regulating the NLRP3 inflammasome. May also inhibit NF-kappa-B signaling distally by affecting the nuclear accumulation of RELA. This Homo sapiens (Human) protein is Pyrin domain-containing protein 2.